Consider the following 90-residue polypeptide: Cell division topological specificity factor (90 aa).

Belongs to the MinE family.

Its function is as follows. Prevents the cell division inhibition by proteins MinC and MinD at internal division sites while permitting inhibition at polar sites. This ensures cell division at the proper site by restricting the formation of a division septum at the midpoint of the long axis of the cell. The chain is Cell division topological specificity factor from Francisella tularensis subsp. tularensis (strain FSC 198).